The following is a 640-amino-acid chain: Serine/threonine-protein kinase WNG1 (640 aa).

An N-terminal signal peptide occupies residues 1–70; that stretch reads MPEQDLASGF…GVLCTVEAGA (70 aa). Disordered stretches follow at residues 100-222 and 237-280; these read PEVT…AQPT and SHPD…DASN. Residues 104–120 are compositionally biased toward polar residues; sequence HASSEGSPQFESSLSQQ. Over residues 124 to 141 the composition is skewed to basic and acidic residues; sequence RPADRGEAHNGEEPRKDA. Residues 175-186 show a composition bias toward low complexity; sequence QRQASSAAESLA. Residues 248-279 show a composition bias toward basic and acidic residues; that stretch reads FSKKQEGRRERRLAVRGDDSFARGHNRDRDAS. One can recognise a Protein kinase domain in the interval 291 to 593; that stretch reads WAKIAALATG…LKQVMEDPYF (303 aa). Position 395 (lysine 395) interacts with ATP. Aspartate 486 functions as the Proton acceptor in the catalytic mechanism. The tract at residues 609 to 640 is disordered; it reads PFRGDFSIDDPDAGGKMYIPPSKEQDHEQENE. Residues 631–640 show a composition bias toward basic and acidic residues; that stretch reads KEQDHEQENE.

It belongs to the protein kinase superfamily. STE Ser/Thr protein kinase family. WNG subfamily. Requires Mg(2+) as cofactor.

Its subcellular location is the cytoplasmic granule. The protein localises to the secreted. It localises to the parasitophorous vacuole lumen. It carries out the reaction L-seryl-[protein] + ATP = O-phospho-L-seryl-[protein] + ADP + H(+). It catalyses the reaction L-threonyl-[protein] + ATP = O-phospho-L-threonyl-[protein] + ADP + H(+). Serine/threonine-protein kinase which, at the tachyzoite stage, phosphorylates several parasitophorous vacuole (PV)-resident proteins such as GRA2, GRA6 and GRA7. By phosphorylating GRA2 and GRA6, regulates the formation of a functional intravacuolar network (IVN); IVN is composed of membranous tubules that bud from the PV membrane into the vacuolar lumen. Plays a role in the establishement of chronic infection in the host by controlling cyst formation in the host tissues. This is Serine/threonine-protein kinase WNG1 from Toxoplasma gondii.